Consider the following 407-residue polypeptide: Lysine racemase (407 aa).

Positions 1–18 are cleaved as a signal peptide; it reads MSLGIRYLALLPLFVITA. Cysteine 19 carries N-palmitoyl cysteine lipidation. The S-diacylglycerol cysteine moiety is linked to residue cysteine 19. A disulfide bridge links cysteine 70 with cysteine 96. Catalysis depends on lysine 74, which acts as the Proton acceptor. Lysine 74 carries the N6-(pyridoxal phosphate)lysine modification. Arginine 173 is a binding site for substrate. The Proton acceptor role is filled by tyrosine 299. Methionine 347 contributes to the substrate binding site.

The protein belongs to the alanine racemase family. Bsr subfamily. In terms of assembly, forms a head-to-tail homodimer in the structure. Pyridoxal 5'-phosphate is required as a cofactor.

The protein resides in the cell membrane. Its subcellular location is the periplasm. The enzyme catalyses L-lysine = D-lysine. The catalysed reaction is L-arginine = D-arginine. With respect to regulation, the racemization activity of Lyr is completely inhibited by hydroxylamine. Amino-acid racemase that catalyzes the interconversion of L-lysine and D-lysine. To a lesser extent, is also able to interconvert arginine enantiomers. Cannot use methionine, asparagine, alanine, leucine, glutamine, phenylalanine and histidine as substrates. In Proteus mirabilis, this protein is Lysine racemase.